We begin with the raw amino-acid sequence, 339 residues long: Putative methylthioribose-1-phosphate isomerase (339 aa).

Substrate-binding positions include 43–45 (RGA), arginine 86, and glutamine 191. The Proton donor role is filled by aspartate 232. 241–242 (NK) is a substrate binding site.

Belongs to the eIF-2B alpha/beta/delta subunits family. MtnA subfamily.

It catalyses the reaction 5-(methylsulfanyl)-alpha-D-ribose 1-phosphate = 5-(methylsulfanyl)-D-ribulose 1-phosphate. Its function is as follows. Catalyzes the interconversion of methylthioribose-1-phosphate (MTR-1-P) into methylthioribulose-1-phosphate (MTRu-1-P). The protein is Putative methylthioribose-1-phosphate isomerase of Archaeoglobus fulgidus (strain ATCC 49558 / DSM 4304 / JCM 9628 / NBRC 100126 / VC-16).